The primary structure comprises 391 residues: Cdc42 effector protein 1 (391 aa).

2 positions are modified to phosphoserine: serine 19 and serine 27. At threonine 34 the chain carries Phosphothreonine. Positions 38–52 (ISHPLGDFRHTMHVG) constitute a CRIB domain. Phosphoserine is present on serine 39. Arginine 53 is subject to Omega-N-methylarginine. 7 positions are modified to phosphoserine: serine 65, serine 73, serine 77, serine 101, serine 113, serine 121, and serine 139. The segment at 163 to 189 (ISRLPRSEKPHDRDRDGSFPSEPGLRR) is disordered. Residues 167–179 (PRSEKPHDRDRDG) show a composition bias toward basic and acidic residues. A phosphoserine mark is found at serine 180, serine 190, serine 192, and serine 195. Repeat copies occupy residues 220–226 (PAAETPA), 227–233 (PAANPPA), 234–240 (PTANPTG), 241–247 (PAANPPA), 248–254 (TTANPPA), 255–261 (PAANPSA), 262–268 (PAATPTG), and 269–275 (PAANPPA). The 8 X 7 AA tandem repeats of [PT]-[AT]-A-[ENT]-[PT]-[PTS]-[AG] stretch occupies residues 220–275 (PAAETPAPAANPPAPTANPTGPAANPPATTANPPAPAANPSAPAATPTGPAANPPA). A disordered region spans residues 221-338 (AAETPAPAAN…HHYPEMDARQ (118 aa)). Positions 236–270 (ANPTGPAANPPATTANPPAPAANPSAPAATPTGPA) are enriched in low complexity. Serine 303 is subject to Phosphoserine. The segment covering 327-338 (GGHHYPEMDARQ) has biased composition (basic and acidic residues). A phosphoserine mark is found at serine 350 and serine 353. A disordered region spans residues 354 to 391 (LDEEWRAPQAGSRTPVPSTVQANTFEFADAEEDDEVKV). The segment covering 364–377 (GSRTPVPSTVQANT) has biased composition (polar residues). The span at 381 to 391 (ADAEEDDEVKV) shows a compositional bias: acidic residues.

It belongs to the BORG/CEP family. In terms of assembly, interacts with RHOQ and CDC42, in a GTP-dependent manner. As to expression, endothelial and bone marrow stromal cells.

It is found in the endomembrane system. The protein localises to the cytoplasm. Its subcellular location is the cytoskeleton. Its function is as follows. Probably involved in the organization of the actin cytoskeleton. Induced membrane extensions in fibroblasts. The protein is Cdc42 effector protein 1 (CDC42EP1) of Homo sapiens (Human).